A 370-amino-acid chain; its full sequence is Biotin synthase (370 aa).

The 236-residue stretch at 79-314 folds into the Radical SAM core domain; that stretch reads CCGNVVDLCS…KQIIRYAGGR (236 aa). Positions 97, 101, and 104 each coordinate [4Fe-4S] cluster. The [2Fe-2S] cluster site is built by Cys-142, Cys-179, Cys-239, and Arg-309.

It belongs to the radical SAM superfamily. Biotin synthase family. As to quaternary structure, homodimer. [4Fe-4S] cluster serves as cofactor. [2Fe-2S] cluster is required as a cofactor.

It catalyses the reaction (4R,5S)-dethiobiotin + (sulfur carrier)-SH + 2 reduced [2Fe-2S]-[ferredoxin] + 2 S-adenosyl-L-methionine = (sulfur carrier)-H + biotin + 2 5'-deoxyadenosine + 2 L-methionine + 2 oxidized [2Fe-2S]-[ferredoxin]. It functions in the pathway cofactor biosynthesis; biotin biosynthesis; biotin from 7,8-diaminononanoate: step 2/2. Functionally, catalyzes the conversion of dethiobiotin (DTB) to biotin by the insertion of a sulfur atom into dethiobiotin via a radical-based mechanism. The chain is Biotin synthase from Trichodesmium erythraeum (strain IMS101).